We begin with the raw amino-acid sequence, 463 residues long: L-seryl-tRNA(Sec) selenium transferase (463 aa).

N6-(pyridoxal phosphate)lysine is present on K295.

The protein belongs to the SelA family. In terms of assembly, homodecamer; pentamer of dimers. Binds only one seryl-tRNA(Sec) per dimer. Pyridoxal 5'-phosphate is required as a cofactor.

The protein localises to the cytoplasm. It catalyses the reaction L-seryl-tRNA(Sec) + selenophosphate + H(+) = L-selenocysteinyl-tRNA(Sec) + phosphate. It participates in aminoacyl-tRNA biosynthesis; selenocysteinyl-tRNA(Sec) biosynthesis; selenocysteinyl-tRNA(Sec) from L-seryl-tRNA(Sec) (bacterial route): step 1/1. In terms of biological role, converts seryl-tRNA(Sec) to selenocysteinyl-tRNA(Sec) required for selenoprotein biosynthesis. The polypeptide is L-seryl-tRNA(Sec) selenium transferase (Salmonella arizonae (strain ATCC BAA-731 / CDC346-86 / RSK2980)).